Reading from the N-terminus, the 210-residue chain is Thiamine-phosphate synthase (210 aa).

Residues 36–40 (QLREK) and asparagine 68 each bind 4-amino-2-methyl-5-(diphosphooxymethyl)pyrimidine. Positions 69 and 88 each coordinate Mg(2+). Serine 107 is a binding site for 4-amino-2-methyl-5-(diphosphooxymethyl)pyrimidine. 133-135 (TGS) provides a ligand contact to 2-[(2R,5Z)-2-carboxy-4-methylthiazol-5(2H)-ylidene]ethyl phosphate. Residue lysine 136 coordinates 4-amino-2-methyl-5-(diphosphooxymethyl)pyrimidine. Residues glycine 164 and 184–185 (IS) contribute to the 2-[(2R,5Z)-2-carboxy-4-methylthiazol-5(2H)-ylidene]ethyl phosphate site.

It belongs to the thiamine-phosphate synthase family. The cofactor is Mg(2+).

It carries out the reaction 2-[(2R,5Z)-2-carboxy-4-methylthiazol-5(2H)-ylidene]ethyl phosphate + 4-amino-2-methyl-5-(diphosphooxymethyl)pyrimidine + 2 H(+) = thiamine phosphate + CO2 + diphosphate. The catalysed reaction is 2-(2-carboxy-4-methylthiazol-5-yl)ethyl phosphate + 4-amino-2-methyl-5-(diphosphooxymethyl)pyrimidine + 2 H(+) = thiamine phosphate + CO2 + diphosphate. It catalyses the reaction 4-methyl-5-(2-phosphooxyethyl)-thiazole + 4-amino-2-methyl-5-(diphosphooxymethyl)pyrimidine + H(+) = thiamine phosphate + diphosphate. Its pathway is cofactor biosynthesis; thiamine diphosphate biosynthesis; thiamine phosphate from 4-amino-2-methyl-5-diphosphomethylpyrimidine and 4-methyl-5-(2-phosphoethyl)-thiazole: step 1/1. Its function is as follows. Condenses 4-methyl-5-(beta-hydroxyethyl)thiazole monophosphate (THZ-P) and 2-methyl-4-amino-5-hydroxymethyl pyrimidine pyrophosphate (HMP-PP) to form thiamine monophosphate (TMP). The protein is Thiamine-phosphate synthase of Moorella thermoacetica (strain ATCC 39073 / JCM 9320).